A 224-amino-acid chain; its full sequence is MSDILYTVNGITRTNDQQGKGASRRLRKQNLVPAIIYGGNEEPTAIAIKKNELWKLLENEAFFSNILTINLEGEEHLAVIKDLQRHPSKGFAMHADFQRIVKGQKINMQIPLHFTGREEAPGIKAGGILSTLVTDIEIVCLPSNLPEFLEVDVSNLEIGESLHLTDIKLPEGVVIFELDVDEPVDRTVVNMQAPTVEEVDTDAEEVDAADVPATEQGSEEDKGE.

Residues 196-224 (VEEVDTDAEEVDAADVPATEQGSEEDKGE) are disordered. The span at 197–208 (EEVDTDAEEVDA) shows a compositional bias: acidic residues.

The protein belongs to the bacterial ribosomal protein bL25 family. CTC subfamily. As to quaternary structure, part of the 50S ribosomal subunit; part of the 5S rRNA/L5/L18/L25 subcomplex. Contacts the 5S rRNA. Binds to the 5S rRNA independently of L5 and L18.

In terms of biological role, this is one of the proteins that binds to the 5S RNA in the ribosome where it forms part of the central protuberance. In Psychrobacter sp. (strain PRwf-1), this protein is Large ribosomal subunit protein bL25.